We begin with the raw amino-acid sequence, 117 residues long: Immunoglobulin lambda variable 7-46 (117 aa).

The first 19 residues, 1-19, serve as a signal peptide directing secretion; the sequence is MAWTPLFLFLLTCCPGSNS. The interval 20-44 is framework-1; sequence QAVVTQEPSLTVSPGGTVTLTCGSS. Positions 20 to 117 constitute an Ig-like domain; it reads QAVVTQEPSL…YCLLSYSGAR (98 aa). Cys41 and Cys109 are joined by a disulfide. Positions 45 to 53 are complementarity-determining-1; it reads TGAVTSGHY. The tract at residues 54–70 is framework-2; sequence PYWFQQKPGQAPRTLIY. The complementarity-determining-2 stretch occupies residues 71–73; sequence DTS. Positions 74–109 are framework-3; that stretch reads NKHSWTPARFSGSLLGGKAALTLLGAQPEDEAEYYC. The tract at residues 110–117 is complementarity-determining-3; that stretch reads LLSYSGAR.

In terms of assembly, immunoglobulins are composed of two identical heavy chains and two identical light chains; disulfide-linked.

The protein resides in the secreted. It is found in the cell membrane. Its function is as follows. V region of the variable domain of immunoglobulin light chains that participates in the antigen recognition. Immunoglobulins, also known as antibodies, are membrane-bound or secreted glycoproteins produced by B lymphocytes. In the recognition phase of humoral immunity, the membrane-bound immunoglobulins serve as receptors which, upon binding of a specific antigen, trigger the clonal expansion and differentiation of B lymphocytes into immunoglobulins-secreting plasma cells. Secreted immunoglobulins mediate the effector phase of humoral immunity, which results in the elimination of bound antigens. The antigen binding site is formed by the variable domain of one heavy chain, together with that of its associated light chain. Thus, each immunoglobulin has two antigen binding sites with remarkable affinity for a particular antigen. The variable domains are assembled by a process called V-(D)-J rearrangement and can then be subjected to somatic hypermutations which, after exposure to antigen and selection, allow affinity maturation for a particular antigen. In Homo sapiens (Human), this protein is Immunoglobulin lambda variable 7-46.